Consider the following 95-residue polypeptide: Aspartyl/glutamyl-tRNA(Asn/Gln) amidotransferase subunit C (95 aa).

It belongs to the GatC family. Heterotrimer of A, B and C subunits.

It catalyses the reaction L-glutamyl-tRNA(Gln) + L-glutamine + ATP + H2O = L-glutaminyl-tRNA(Gln) + L-glutamate + ADP + phosphate + H(+). It carries out the reaction L-aspartyl-tRNA(Asn) + L-glutamine + ATP + H2O = L-asparaginyl-tRNA(Asn) + L-glutamate + ADP + phosphate + 2 H(+). Allows the formation of correctly charged Asn-tRNA(Asn) or Gln-tRNA(Gln) through the transamidation of misacylated Asp-tRNA(Asn) or Glu-tRNA(Gln) in organisms which lack either or both of asparaginyl-tRNA or glutaminyl-tRNA synthetases. The reaction takes place in the presence of glutamine and ATP through an activated phospho-Asp-tRNA(Asn) or phospho-Glu-tRNA(Gln). This is Aspartyl/glutamyl-tRNA(Asn/Gln) amidotransferase subunit C from Methylorubrum populi (strain ATCC BAA-705 / NCIMB 13946 / BJ001) (Methylobacterium populi).